A 639-amino-acid chain; its full sequence is UPF0313 protein CLJ_B0249 (639 aa).

The 272-residue stretch at 295-566 (AIKEVKFSIT…RMQRSLLQFS (272 aa)) folds into the Radical SAM core domain. Cys309, Cys313, and Cys316 together coordinate [4Fe-4S] cluster. The tract at residues 597–639 (YNKPYKKSHKKNNAKNKNNNYNKNKDVSKKNKKNSLSKHKKRK) is disordered. Basic residues-rich tracts occupy residues 600 to 610 (PYKKSHKKNNA) and 626 to 639 (KNKKNSLSKHKKRK).

The protein belongs to the UPF0313 family. [4Fe-4S] cluster is required as a cofactor.

The chain is UPF0313 protein CLJ_B0249 from Clostridium botulinum (strain 657 / Type Ba4).